The chain runs to 350 residues: Protein pelota homolog (350 aa).

This sequence belongs to the eukaryotic release factor 1 family. Pelota subfamily. Monomer. It depends on a divalent metal cation as a cofactor.

It is found in the cytoplasm. In terms of biological role, may function in recognizing stalled ribosomes, interact with stem-loop structures in stalled mRNA molecules, and effect endonucleolytic cleavage of the mRNA. May play a role in the release non-functional ribosomes and degradation of damaged mRNAs. Has endoribonuclease activity. The sequence is that of Protein pelota homolog from Methanosarcina barkeri (strain Fusaro / DSM 804).